Reading from the N-terminus, the 1263-residue chain is DNA-directed RNA polymerase subunit beta (1263 aa).

This sequence belongs to the RNA polymerase beta chain family. In terms of assembly, the RNAP catalytic core consists of 2 alpha, 1 beta, 1 beta' and 1 omega subunit. When a sigma factor is associated with the core the holoenzyme is formed, which can initiate transcription.

The enzyme catalyses RNA(n) + a ribonucleoside 5'-triphosphate = RNA(n+1) + diphosphate. DNA-dependent RNA polymerase catalyzes the transcription of DNA into RNA using the four ribonucleoside triphosphates as substrates. The protein is DNA-directed RNA polymerase subunit beta of Thermotoga sp. (strain RQ2).